The chain runs to 64 residues: Large ribosomal subunit protein bL32 (64 aa).

Basic residues predominate over residues 1–15 (MAVPKRKVSKSRRDS). The tract at residues 1–21 (MAVPKRKVSKSRRDSRRAQTF) is disordered.

This sequence belongs to the bacterial ribosomal protein bL32 family.

The protein is Large ribosomal subunit protein bL32 of Symbiobacterium thermophilum (strain DSM 24528 / JCM 14929 / IAM 14863 / T).